A 215-amino-acid polypeptide reads, in one-letter code: Urease accessory protein UreG (215 aa).

Position 24 to 31 (24 to 31) interacts with GTP; the sequence is GPVGSGKT.

Belongs to the SIMIBI class G3E GTPase family. UreG subfamily. As to quaternary structure, homodimer. UreD, UreF and UreG form a complex that acts as a GTP-hydrolysis-dependent molecular chaperone, activating the urease apoprotein by helping to assemble the nickel containing metallocenter of UreC. The UreE protein probably delivers the nickel.

It localises to the cytoplasm. Functionally, facilitates the functional incorporation of the urease nickel metallocenter. This process requires GTP hydrolysis, probably effectuated by UreG. The protein is Urease accessory protein UreG of Burkholderia ambifaria (strain ATCC BAA-244 / DSM 16087 / CCUG 44356 / LMG 19182 / AMMD) (Burkholderia cepacia (strain AMMD)).